Here is a 491-residue protein sequence, read N- to C-terminus: Probable cytosol aminopeptidase (491 aa).

Mn(2+) contacts are provided by Lys261 and Asp266. Residue Lys273 is part of the active site. Residues Asp285, Asp344, and Glu346 each contribute to the Mn(2+) site. The active site involves Arg348.

The protein belongs to the peptidase M17 family. Mn(2+) is required as a cofactor.

The protein localises to the cytoplasm. The enzyme catalyses Release of an N-terminal amino acid, Xaa-|-Yaa-, in which Xaa is preferably Leu, but may be other amino acids including Pro although not Arg or Lys, and Yaa may be Pro. Amino acid amides and methyl esters are also readily hydrolyzed, but rates on arylamides are exceedingly low.. It catalyses the reaction Release of an N-terminal amino acid, preferentially leucine, but not glutamic or aspartic acids.. Its function is as follows. Presumably involved in the processing and regular turnover of intracellular proteins. Catalyzes the removal of unsubstituted N-terminal amino acids from various peptides. The polypeptide is Probable cytosol aminopeptidase (Picosynechococcus sp. (strain ATCC 27264 / PCC 7002 / PR-6) (Agmenellum quadruplicatum)).